The chain runs to 194 residues: RNA pyrophosphohydrolase (194 aa).

The Nudix hydrolase domain occupies 6-149; sequence GFRPNVGIIL…KRDVYQRALQ (144 aa). Residues 38–59 carry the Nudix box motif; it reads GGIKFGETPEQAMYRELEEEVG. The tract at residues 158–194 is disordered; the sequence is PTQHVPPQHNTARYLRQTHASRKPDEPSTEKTKPDNE. Basic and acidic residues predominate over residues 179–194; that stretch reads RKPDEPSTEKTKPDNE.

This sequence belongs to the Nudix hydrolase family. RppH subfamily. Requires a divalent metal cation as cofactor.

In terms of biological role, accelerates the degradation of transcripts by removing pyrophosphate from the 5'-end of triphosphorylated RNA, leading to a more labile monophosphorylated state that can stimulate subsequent ribonuclease cleavage. This Janthinobacterium sp. (strain Marseille) (Minibacterium massiliensis) protein is RNA pyrophosphohydrolase.